A 1342-amino-acid chain; its full sequence is DNA-directed RNA polymerase subunit beta (1342 aa).

This sequence belongs to the RNA polymerase beta chain family. The RNAP catalytic core consists of 2 alpha, 1 beta, 1 beta' and 1 omega subunit. When a sigma factor is associated with the core the holoenzyme is formed, which can initiate transcription.

It carries out the reaction RNA(n) + a ribonucleoside 5'-triphosphate = RNA(n+1) + diphosphate. DNA-dependent RNA polymerase catalyzes the transcription of DNA into RNA using the four ribonucleoside triphosphates as substrates. The protein is DNA-directed RNA polymerase subunit beta of Buchnera aphidicola subsp. Acyrthosiphon pisum (strain Tuc7).